We begin with the raw amino-acid sequence, 114 residues long: MKTIIVFLSLLVLATKFGDANEGVNQEQMKEVIQNEFREDFLNEMAAMSLLQQLEAIESTLLEKEADRNSRQKRCLGENVPCGDFPCCGKLACEKTFGYGWWYKSPFCVKPSKG.

The first 20 residues, Met1–Ala20, serve as a signal peptide directing secretion. Residues Asn21 to Arg74 constitute a propeptide that is removed on maturation. 3 cysteine pairs are disulfide-bonded: Cys75–Cys88, Cys82–Cys93, and Cys87–Cys108.

Belongs to the neurotoxin 14 (magi-1) family. 03 (ICK-30-40) subfamily. Expressed by the venom gland.

The protein resides in the secreted. In terms of biological role, ion channel inhibitor. In Trittame loki (Brush-footed trapdoor spider), this protein is U17-barytoxin-Tl1d.